The sequence spans 163 residues: Staphylokinase (163 aa).

Positions 1–27 are cleaved as a signal peptide; the sequence is MLKRSLLFLTVLLLLFSFSSITNEVSA.

Belongs to the staphylokinase family.

The protein localises to the secreted. Functionally, potent plasminogen activator that converts plasminogen into plasmin. It forms a 1:1 complex with plasmin, which in turn activates other plasminogen molecules. The polypeptide is Staphylokinase (sak) (Staphylococcus phage phi13 (Bacteriophage phi-13)).